The sequence spans 341 residues: Protein CbhE (341 aa).

Acidic residues predominate over residues 287–297 (IDEENTSDSSE). The tract at residues 287–341 (IDEENTSDSSEEGTSKNRFRDTLFSNVPDSSSDSENEQEREKKELAGKTPSFRLC) is disordered. Residues 323-332 (EQEREKKELA) are compositionally biased toward basic and acidic residues.

It localises to the cytoplasm. Functionally, may be involved in the pathogenesis of acute Q fever. This chain is Protein CbhE (cbhE), found in Coxiella burnetii (strain RSA 493 / Nine Mile phase I).